Here is a 255-residue protein sequence, read N- to C-terminus: Aliphatic sulfonates import ATP-binding protein SsuB (255 aa).

Residues 12–233 (LLLNAVSKHY…RLGSVRLAEL (222 aa)) form the ABC transporter domain. Residue 44-51 (GRSGGGKS) coordinates ATP.

Belongs to the ABC transporter superfamily. Aliphatic sulfonates importer (TC 3.A.1.17.2) family. The complex is composed of two ATP-binding proteins (SsuB), two transmembrane proteins (SsuC) and a solute-binding protein (SsuA).

It localises to the cell inner membrane. The catalysed reaction is ATP + H2O + aliphatic sulfonate-[sulfonate-binding protein]Side 1 = ADP + phosphate + aliphatic sulfonateSide 2 + [sulfonate-binding protein]Side 1.. Functionally, part of the ABC transporter complex SsuABC involved in aliphatic sulfonates import. Responsible for energy coupling to the transport system. In Shigella sonnei (strain Ss046), this protein is Aliphatic sulfonates import ATP-binding protein SsuB.